The chain runs to 601 residues: ATP-dependent lipid A-core flippase (601 aa).

Helical transmembrane passes span 27 to 47, 83 to 103, 174 to 194, and 267 to 287; these read IGLF…QPML, LLIV…NYFL, LLWM…LIAV, and PLLQ…VLYL. One can recognise an ABC transmembrane type-1 domain in the interval 31–322; sequence LISIVGFLIF…LSEVSSTIQK (292 aa). In terms of domain architecture, ABC transporter spans 354-590; the sequence is LEVRNLSFTY…NGYYSRLHAM (237 aa). 388 to 395 contacts ATP; it reads GRSGSGKS.

It belongs to the ABC transporter superfamily. Lipid exporter (TC 3.A.1.106) family. Homodimer.

It localises to the cell inner membrane. The catalysed reaction is ATP + H2O + lipid A-core oligosaccharideSide 1 = ADP + phosphate + lipid A-core oligosaccharideSide 2.. Functionally, involved in lipopolysaccharide (LPS) biosynthesis. Translocates lipid A-core from the inner to the outer leaflet of the inner membrane. Transmembrane domains (TMD) form a pore in the inner membrane and the ATP-binding domain (NBD) is responsible for energy generation. The polypeptide is ATP-dependent lipid A-core flippase (Pseudomonas fluorescens (strain ATCC BAA-477 / NRRL B-23932 / Pf-5)).